The primary structure comprises 333 residues: Phosphoribosylformylglycinamidine cyclo-ligase (333 aa).

This sequence belongs to the AIR synthase family.

It is found in the cytoplasm. The catalysed reaction is 2-formamido-N(1)-(5-O-phospho-beta-D-ribosyl)acetamidine + ATP = 5-amino-1-(5-phospho-beta-D-ribosyl)imidazole + ADP + phosphate + H(+). The protein operates within purine metabolism; IMP biosynthesis via de novo pathway; 5-amino-1-(5-phospho-D-ribosyl)imidazole from N(2)-formyl-N(1)-(5-phospho-D-ribosyl)glycinamide: step 2/2. The polypeptide is Phosphoribosylformylglycinamidine cyclo-ligase (Clostridium perfringens (strain ATCC 13124 / DSM 756 / JCM 1290 / NCIMB 6125 / NCTC 8237 / Type A)).